Reading from the N-terminus, the 289-residue chain is Geranylgeranyl diphosphate synthase (289 aa).

Residues Arg-43 and His-73 each contribute to the isopentenyl diphosphate site. 2 residues coordinate Mg(2+): Asp-80 and Asp-86. Arg-91 contacts (2E,6E)-farnesyl diphosphate. Isopentenyl diphosphate is bound at residue Arg-92. Positions 170, 171, and 205 each coordinate (2E,6E)-farnesyl diphosphate.

It belongs to the FPP/GGPP synthase family. The cofactor is Mg(2+).

It catalyses the reaction isopentenyl diphosphate + (2E,6E)-farnesyl diphosphate = (2E,6E,10E)-geranylgeranyl diphosphate + diphosphate. Its pathway is isoprenoid biosynthesis; geranylgeranyl diphosphate biosynthesis; geranylgeranyl diphosphate from farnesyl diphosphate and isopentenyl diphosphate: step 1/1. Catalyzes the condensation of farnesyl diphosphate (FPP) and isopentenyl diphosphate (IPP) to yield geranylgeranyl diphosphate (GGPP) needed for biosynthesis of carotenoids and diterpenes. In Rhodobacter capsulatus (strain ATCC BAA-309 / NBRC 16581 / SB1003), this protein is Geranylgeranyl diphosphate synthase (crtE).